We begin with the raw amino-acid sequence, 256 residues long: Hydroxyacylglutathione hydrolase (256 aa).

His57, His59, Asp61, His62, His115, Asp134, and His172 together coordinate Zn(2+).

Belongs to the metallo-beta-lactamase superfamily. Glyoxalase II family. Monomer. It depends on Zn(2+) as a cofactor.

The catalysed reaction is an S-(2-hydroxyacyl)glutathione + H2O = a 2-hydroxy carboxylate + glutathione + H(+). It participates in secondary metabolite metabolism; methylglyoxal degradation; (R)-lactate from methylglyoxal: step 2/2. Functionally, thiolesterase that catalyzes the hydrolysis of S-D-lactoyl-glutathione to form glutathione and D-lactic acid. This is Hydroxyacylglutathione hydrolase from Rhizobium etli (strain ATCC 51251 / DSM 11541 / JCM 21823 / NBRC 15573 / CFN 42).